A 437-amino-acid chain; its full sequence is Enolase (437 aa).

Residue Q162 participates in (2R)-2-phosphoglycerate binding. Residue E204 is the Proton donor of the active site. D251, E297, and D324 together coordinate Mg(2+). (2R)-2-phosphoglycerate-binding residues include K349, R378, S379, and K400. K349 acts as the Proton acceptor in catalysis.

It belongs to the enolase family. Mg(2+) serves as cofactor.

It is found in the cytoplasm. The protein localises to the secreted. Its subcellular location is the cell surface. It catalyses the reaction (2R)-2-phosphoglycerate = phosphoenolpyruvate + H2O. The protein operates within carbohydrate degradation; glycolysis; pyruvate from D-glyceraldehyde 3-phosphate: step 4/5. Catalyzes the reversible conversion of 2-phosphoglycerate (2-PG) into phosphoenolpyruvate (PEP). It is essential for the degradation of carbohydrates via glycolysis. This chain is Enolase, found in Chlorobium phaeobacteroides (strain DSM 266 / SMG 266 / 2430).